We begin with the raw amino-acid sequence, 354 residues long: Guanine nucleotide-binding protein G(i) subunit alpha-1 (354 aa).

A lipid anchor (N-myristoyl glycine) is attached at glycine 2. Cysteine 3 carries S-palmitoyl cysteine lipidation. Residues 32–354 (REVKLLLLGA…KNNLKDCGLF (323 aa)) form the G-alpha domain. Positions 35-48 (KLLLLGAGESGKST) are G1 motif. GTP-binding positions include 43–48 (ESGKST), 150–151 (DS), and 175–178 (LRTR). Residue serine 47 coordinates Mg(2+). A G2 motif region spans residues 173-181 (DVLRTRVKT). Threonine 181 lines the Mg(2+) pocket. The G3 motif stretch occupies residues 196 to 205 (FKMFDVGGQR). Residues 200–204 (DVGGQ), 269–272 (NKKD), and alanine 326 contribute to the GTP site. Residues 265 to 272 (ILFLNKKD) are G4 motif. Residues 324-329 (TCATDT) form a G5 motif region.

The protein belongs to the G-alpha family. G(i/o/t/z) subfamily. As to quaternary structure, heterotrimeric G proteins are composed of 3 units; alpha, beta and gamma. The alpha chain contains the guanine nucleotide binding site. Part of a spindle orientation complex at least composed of GNAI1, GPSM2 and NUMA1. Identified in complex with the beta subunit GNB1 and the gamma subunit GNG1. Identified in complex with the beta subunit GNB1 and the gamma subunit GNG2. Component of the TAS2R14-GNAI1 complex, consisting of TAS2R14, GNAI1, GNB1 and GNG2; within the complex interacts with TAS2R14; this complex plays a role in the perception of bitterness. GTP binding causes dissociation of the heterotrimer, liberating the individual subunits so that they can interact with downstream effector proteins. Interacts (GDP-bound form) with GPSM1; this inhibits guanine nucleotide exchange and GTP binding. Interacts (GDP-bound form) with GPSM2 (via GoLoco domains); this inhibits guanine nucleotide exchange. Interacts with RGS10; this strongly enhances GTP hydrolysis. Interacts with RGS1 and RGS16. Interacts with RGS4. Interacts with RGS12. Interacts (via active GTP- or inactive GDP-bound forms) with RGS14 (via RGS and GoLoco domains). Interacts with RGS3, RGS6, RGS7, RGS8, RGS17, RGS18 and RGS20 (in vitro). Interacts (GDP-bound form) with RIC8A (via C-terminus); promoting GNAI1 folding and association with the plasma membrane. Interacts (inactive GDP-bound form) with NUCB1 (via GBA motif); the interaction leads to activation of GNAI1. Interacts (inactive GDP-bound form) with CCDC88C/DAPLE (via GBA motif); the interaction leads to activation of GNAI1. Interacts (inactive GDP-bound form) with CCDC8A/GIV (via GBA motif). Interacts with GPR15. Post-translationally, myristoylation at Gly-2 is required for membrane anchoring before palmitoylation. In terms of processing, palmitoylation at Cys-3 varies with membrane lipid composition.

Its subcellular location is the nucleus. The protein localises to the cytoplasm. It is found in the cell membrane. It localises to the cytoskeleton. The protein resides in the microtubule organizing center. Its subcellular location is the centrosome. The protein localises to the cell cortex. It is found in the membrane. The catalysed reaction is GTP + H2O = GDP + phosphate + H(+). Functionally, guanine nucleotide-binding proteins (G proteins) function as transducers downstream of G protein-coupled receptors (GPCRs) in numerous signaling cascades. The alpha chain contains the guanine nucleotide binding site and alternates between an active, GTP-bound state and an inactive, GDP-bound state. Signaling by an activated GPCR promotes GDP release and GTP binding. The alpha subunit has a low GTPase activity that converts bound GTP to GDP, thereby terminating the signal. Both GDP release and GTP hydrolysis are modulated by numerous regulatory proteins. Signaling is mediated via effector proteins, such as adenylate cyclase. Inhibits adenylate cyclase activity of ADCY1, ADCY5 and ADCY6, leading to decreased intracellular cAMP levels. The inactive GDP-bound form prevents the association of RGS14 with centrosomes and is required for the translocation of RGS14 from the cytoplasm to the plasma membrane. Required for normal cytokinesis during mitosis. Required for cortical dynein-dynactin complex recruitment during metaphase. The sequence is that of Guanine nucleotide-binding protein G(i) subunit alpha-1 (Gnai1) from Rattus norvegicus (Rat).